We begin with the raw amino-acid sequence, 185 residues long: Ribosome-recycling factor (185 aa).

It belongs to the RRF family.

The protein resides in the cytoplasm. Functionally, responsible for the release of ribosomes from messenger RNA at the termination of protein biosynthesis. May increase the efficiency of translation by recycling ribosomes from one round of translation to another. This Campylobacter lari (strain RM2100 / D67 / ATCC BAA-1060) protein is Ribosome-recycling factor.